We begin with the raw amino-acid sequence, 154 residues long: SsrA-binding protein (154 aa).

Belongs to the SmpB family.

It is found in the cytoplasm. In terms of biological role, required for rescue of stalled ribosomes mediated by trans-translation. Binds to transfer-messenger RNA (tmRNA), required for stable association of tmRNA with ribosomes. tmRNA and SmpB together mimic tRNA shape, replacing the anticodon stem-loop with SmpB. tmRNA is encoded by the ssrA gene; the 2 termini fold to resemble tRNA(Ala) and it encodes a 'tag peptide', a short internal open reading frame. During trans-translation Ala-aminoacylated tmRNA acts like a tRNA, entering the A-site of stalled ribosomes, displacing the stalled mRNA. The ribosome then switches to translate the ORF on the tmRNA; the nascent peptide is terminated with the 'tag peptide' encoded by the tmRNA and targeted for degradation. The ribosome is freed to recommence translation, which seems to be the essential function of trans-translation. The sequence is that of SsrA-binding protein from Treponema pallidum (strain Nichols).